A 288-amino-acid chain; its full sequence is Ninja-family protein 6 (288 aa).

Disordered stretches follow at residues 1–50 and 66–207; these read MASR…KRPR and LHAD…TRTG. Gly residues predominate over residues 12-23; it reads AGEGAGPPGDAG. The span at 76–86 shows a compositional bias: low complexity; it reads LPLLRTTSLPT. The segment covering 91 to 103 has biased composition (basic and acidic residues); the sequence is ERWRRREMQSRRR. Residues 131-173 are compositionally biased toward polar residues; that stretch reads RRSNASQGSNSASTTEQGIGGSMFNQSADAKSPSTSDNRNQND. Over residues 195–207 the composition is skewed to low complexity; sequence RLRTLGSLTTRTG.

It belongs to the Ninja family.

The protein resides in the nucleus. The chain is Ninja-family protein 6 from Zea mays (Maize).